We begin with the raw amino-acid sequence, 65 residues long: Neuropeptide-like protein 28 (65 aa).

An N-terminal signal peptide occupies residues 1–22 (MISTSSILILVFLLACFMATSA). Tyrosine amide is present on residues tyrosine 29, tyrosine 39, tyrosine 47, and tyrosine 55. At tryptophan 63 the chain carries Tryptophan amide.

It belongs to the YARP (YGGW-amide related peptide) family.

It localises to the secreted. Its function is as follows. May have antimicrobial activity. In Caenorhabditis elegans, this protein is Neuropeptide-like protein 28 (nlp-28).